The chain runs to 195 residues: Pyridoxal 5'-phosphate synthase subunit PdxT (195 aa).

46-48 (GES) provides a ligand contact to L-glutamine. The active-site Nucleophile is the Cys-78. Residues Arg-105 and 133-134 (IR) each bind L-glutamine. Residues His-169 and Glu-171 each act as charge relay system in the active site.

The protein belongs to the glutaminase PdxT/SNO family. In the presence of PdxS, forms a dodecamer of heterodimers. Only shows activity in the heterodimer.

The enzyme catalyses aldehydo-D-ribose 5-phosphate + D-glyceraldehyde 3-phosphate + L-glutamine = pyridoxal 5'-phosphate + L-glutamate + phosphate + 3 H2O + H(+). It carries out the reaction L-glutamine + H2O = L-glutamate + NH4(+). The protein operates within cofactor biosynthesis; pyridoxal 5'-phosphate biosynthesis. Functionally, catalyzes the hydrolysis of glutamine to glutamate and ammonia as part of the biosynthesis of pyridoxal 5'-phosphate. The resulting ammonia molecule is channeled to the active site of PdxS. This is Pyridoxal 5'-phosphate synthase subunit PdxT from Shouchella clausii (strain KSM-K16) (Alkalihalobacillus clausii).